Consider the following 413-residue polypeptide: Protein esc1 (413 aa).

Over residues 1–22 (MSSYALPSMQPTPTSSIPLRQM) the composition is skewed to polar residues. Disordered regions lie at residues 1–202 (MSSY…NQPS) and 230–265 (MYVP…YSQG). A compositionally biased stretch (low complexity) spans 23-42 (SQPTTSAPSNSASSTPYSPQ). Positions 43-63 (QVPLTHNSYPLSTPSSFQHGQ) are enriched in polar residues. 2 stretches are compositionally biased toward low complexity: residues 86 to 103 (SAAP…STAA) and 116 to 126 (SSSSYVYSVPP). Residues 127-136 (TNSTTSQASA) show a composition bias toward polar residues. Residues 150–197 (STTLTPSTTDSSSTDVSSSDSVSTSASSSNASNTVSVTSPASSSATPL) are compositionally biased toward low complexity. A bHLH domain is found at 334–385 (ELRTSHKLAERKRRKEIKELFDDLKDALPLDKSTKSSKWGLLTRAIQYIEQL).

Efficient DNA binding requires dimerization with another bHLH protein.

Its subcellular location is the nucleus. Involved in the sexual differentiation process. Modulate the ability of the cell to differentiate in response to the nitrogen starvation signal; in particular in response to decreases in the level of cellular cAMP. The chain is Protein esc1 (esc1) from Schizosaccharomyces pombe (strain 972 / ATCC 24843) (Fission yeast).